The following is a 103-amino-acid chain: MSGRGKGGKGLGKGGAKRHRKVLRDNIQGITKPAIRRLARRGGVKRISGLIYEETRGVLKVFLENVIRDAVTYTEHAKRKTVTAMDVVYALKRQERTLYGFGG.

Over residues 1-14 the composition is skewed to gly residues; it reads MSGRGKGGKGLGKG. The interval 1–20 is disordered; sequence MSGRGKGGKGLGKGGAKRHR. At Ser-2 the chain carries N-acetylserine. Position 2 is a phosphoserine (Ser-2). Position 4 is an asymmetric dimethylarginine; by PRMT1; alternate (Arg-4). Position 4 is a citrulline; alternate (Arg-4). Omega-N-methylarginine; by PRMT1; alternate is present on Arg-4. Arg-4 carries the symmetric dimethylarginine; by PRMT5 and PRMT7; alternate modification. Residues Lys-6, Lys-9, Lys-13, and Lys-17 each carry the N6-(2-hydroxyisobutyryl)lysine; alternate modification. Lys-6 bears the N6-acetyl-N6-methyllysine; alternate mark. N6-acetyllysine occurs at positions 6, 9, 13, and 17. An N6-butyryllysine; alternate mark is found at Lys-6, Lys-9, Lys-13, and Lys-17. At Lys-6 the chain carries N6-glutaryllysine; alternate. Lys-6, Lys-9, Lys-13, and Lys-17 each carry N6-lactoyllysine; alternate. Position 9 is an N6-propionyllysine; alternate (Lys-9). N6-acetyl-N6-methyllysine; alternate is present on Lys-13. Residue Lys-13 is modified to N6-glutaryllysine; alternate. Lys-13 carries the post-translational modification N6-methyllysine; alternate. Lys-17 carries the N6-propionyllysine; alternate modification. The residue at position 21 (Lys-21) is an N6-methyllysine; alternate. Lys-21 carries the N6,N6,N6-trimethyllysine; alternate modification. An N6,N6-dimethyllysine; alternate modification is found at Lys-21. N6-(2-hydroxyisobutyryl)lysine; alternate is present on residues Lys-32 and Lys-45. An N6-acetyllysine modification is found at Lys-32. An N6-butyryllysine; alternate mark is found at Lys-32 and Lys-45. Residue Lys-32 is modified to N6-glutaryllysine; alternate. Lys-32 is modified (N6-lactoyllysine; alternate). Lys-32 and Lys-45 each carry N6-propionyllysine; alternate. Lys-32 carries the post-translational modification N6-succinyllysine; alternate. A Glycyl lysine isopeptide (Lys-Gly) (interchain with G-Cter in UFM1); alternate cross-link involves residue Lys-32. Ser-48 carries the post-translational modification Phosphoserine. Residue Tyr-52 is modified to Phosphotyrosine. Position 60 is an N6-acetyllysine (Lys-60). Residues Lys-60, Lys-78, and Lys-80 each carry the N6-glutaryllysine; alternate modification. Lys-60 bears the N6-(2-hydroxyisobutyryl)lysine mark. 2 positions are modified to N6-(2-hydroxyisobutyryl)lysine; alternate: Lys-78 and Lys-80. N6-butyryllysine; alternate occurs at positions 78 and 80. Lys-78 bears the N6-lactoyllysine; alternate mark. N6-propionyllysine; alternate is present on residues Lys-78 and Lys-80. Position 78 is an N6-succinyllysine (Lys-78). Residue Lys-80 is modified to N6-acetyllysine. Residue Tyr-89 is modified to Phosphotyrosine. Position 92 is an N6-(2-hydroxyisobutyryl)lysine; alternate (Lys-92). An N6-butyryllysine; alternate modification is found at Lys-92. The residue at position 92 (Lys-92) is an N6-glutaryllysine; alternate. Lys-92 bears the N6-lactoyllysine; alternate mark. An N6-propionyllysine; alternate modification is found at Lys-92. Lys-92 carries the post-translational modification N6-succinyllysine; alternate. Residue Lys-92 is modified to N6-acetyllysine; alternate. Residue Lys-92 forms a Glycyl lysine isopeptide (Lys-Gly) (interchain with G-Cter in ubiquitin); alternate linkage.

The protein belongs to the histone H4 family. In terms of assembly, the nucleosome is a histone octamer containing two molecules each of H2A, H2B, H3 and H4 assembled in one H3-H4 heterotetramer and two H2A-H2B heterodimers. The octamer wraps approximately 147 bp of DNA. Acetylation at Lys-6 (H4K5ac), Lys-9 (H4K8ac), Lys-13 (H4K12ac) and Lys-17 (H4K16ac) occurs in coding regions of the genome but not in heterochromatin. Post-translationally, citrullination at Arg-4 (H4R3ci) by PADI4 impairs methylation. In terms of processing, monomethylation and asymmetric dimethylation at Arg-4 (H4R3me1 and H4R3me2a, respectively) by PRMT1 favors acetylation at Lys-9 (H4K8ac) and Lys-13 (H4K12ac). Demethylation is performed by JMJD6. Symmetric dimethylation on Arg-4 (H4R3me2s) by the PRDM1/PRMT5 complex may play a crucial role in the germ-cell lineage. Monomethylated, dimethylated or trimethylated at Lys-21 (H4K20me1, H4K20me2, H4K20me3). Monomethylation is performed by KMT5A/SET8. Trimethylation is performed by KMT5B and KMT5C and induces gene silencing. Monomethylated at Lys-13 (H4K12me1) by N6AMT1; H4K12me1 modification is present at the promoters of numerous genes encoding cell cycle regulators. Post-translationally, acetyl-methylated at Lys-6 and Lys-13 (H4K5acme and H4K12acme, respectively), acetyl-methylation is an epigenetic mark of active chromatin associated with increased transcriptional initiation. Acetyl-methylation is formed by acetylation by EP300/p300 of lysine residues that are already monomethylated on the same side chain. H4K5acme and H4K12acme marks specifically bind BRD2. In terms of processing, ubiquitinated by the CUL4-DDB-RBX1 complex in response to ultraviolet irradiation. This may weaken the interaction between histones and DNA and facilitate DNA accessibility to repair proteins. Monoubiquitinated at Lys-92 of histone H4 (H4K91ub1) in response to DNA damage. The exact role of H4K91ub1 in DNA damage response is still unclear but it may function as a licensing signal for additional histone H4 post-translational modifications such as H4 Lys-21 methylation (H4K20me). Sumoylated, which is associated with transcriptional repression. Post-translationally, butyrylation of histones marks active promoters and competes with histone acetylation. In terms of processing, glutarylation at Lys-92 (H4K91glu) destabilizes nucleosomes by promoting dissociation of the H2A-H2B dimers from nucleosomes. Ufmylated; monofmylated by UFL1 at Lys-32 (H4K31Ufm1) in response to DNA damage. Post-translationally, lactylated in macrophages by EP300/P300 by using lactoyl-CoA directly derived from endogenous or exogenous lactate, leading to stimulates gene transcription. Delactylated by SIRT3 at Lys-17 (H4K16la).

The protein localises to the nucleus. Its subcellular location is the chromosome. Its function is as follows. Core component of nucleosome. Nucleosomes wrap and compact DNA into chromatin, limiting DNA accessibility to the cellular machineries which require DNA as a template. Histones thereby play a central role in transcription regulation, DNA repair, DNA replication and chromosomal stability. DNA accessibility is regulated via a complex set of post-translational modifications of histones, also called histone code, and nucleosome remodeling. This chain is Histone H4 type VIII (H4-VIII), found in Gallus gallus (Chicken).